A 213-amino-acid polypeptide reads, in one-letter code: Carboxysome shell protein CcmP (213 aa).

2 consecutive BMC circularly permuted domains span residues 4–106 and 107–211; these read ELRS…RLKP and KIVS…GDRS. Residues 69-70 carry the Probably important for pore gating motif; it reads ER.

Belongs to the EutL/PduB family. A dimer of stacked trimers, the same faces interact.

It is found in the carboxysome. Its function is as follows. Probably part of the carboxysome shell, a polyhedral inclusion where RuBisCO (ribulose bisphosphate carboxylase, rbcL-rbcS) is sequestered. It is thought that this protein controls transport of RuBisCO reactants in and out of the carboxysome; residual densities in the 4 X-ray structures suggest that differing compounds bind in interior pockets, depending on the open or closed state of the pore. The protein is Carboxysome shell protein CcmP of Synechococcus elongatus (strain ATCC 33912 / PCC 7942 / FACHB-805) (Anacystis nidulans R2).